The sequence spans 75 residues: ATP synthase subunit c (75 aa).

The next 2 membrane-spanning stretches (helical) occupy residues 9-29 (IGAGLAAIGMIGSGIGVGNIW) and 52-72 (IGFAVTEAIALFALVVALILL).

It belongs to the ATPase C chain family. As to quaternary structure, F-type ATPases have 2 components, F(1) - the catalytic core - and F(0) - the membrane proton channel. F(1) has five subunits: alpha(3), beta(3), gamma(1), delta(1), epsilon(1). F(0) has four main subunits: a(1), b(1), b'(1) and c(10-14). The alpha and beta chains form an alternating ring which encloses part of the gamma chain. F(1) is attached to F(0) by a central stalk formed by the gamma and epsilon chains, while a peripheral stalk is formed by the delta, b and b' chains.

The protein localises to the cell inner membrane. Functionally, f(1)F(0) ATP synthase produces ATP from ADP in the presence of a proton or sodium gradient. F-type ATPases consist of two structural domains, F(1) containing the extramembraneous catalytic core and F(0) containing the membrane proton channel, linked together by a central stalk and a peripheral stalk. During catalysis, ATP synthesis in the catalytic domain of F(1) is coupled via a rotary mechanism of the central stalk subunits to proton translocation. Its function is as follows. Key component of the F(0) channel; it plays a direct role in translocation across the membrane. A homomeric c-ring of between 10-14 subunits forms the central stalk rotor element with the F(1) delta and epsilon subunits. This chain is ATP synthase subunit c, found in Rhodospirillum rubrum (strain ATCC 11170 / ATH 1.1.1 / DSM 467 / LMG 4362 / NCIMB 8255 / S1).